Reading from the N-terminus, the 258-residue chain is 14-3-3-like protein 16R (258 aa).

The segment at 238-258 (DMQDDGTDEIKEAAPKPDNNE) is disordered. Over residues 245 to 258 (DEIKEAAPKPDNNE) the composition is skewed to basic and acidic residues.

It belongs to the 14-3-3 family.

In Solanum tuberosum (Potato), this protein is 14-3-3-like protein 16R.